A 906-amino-acid chain; its full sequence is Cadherin-2 (906 aa).

Positions 1–25 (MCRIAGAPRTLLPLLAALLQASVEA) are cleaved as a signal peptide. The propeptide occupies 26–159 (SGEIALCKTG…HSGALQRQKR (134 aa)). Cadherin domains follow at residues 160–267 (DWVI…RPEF), 268–382 (LHQV…PPEF), 383–497 (TAMT…NPYF), 498–603 (APNP…DNAP), and 604–717 (QVLP…RIVG). Residues 160–724 (DWVIPPINLP…IVGAGLGTGA (565 aa)) are Extracellular-facing. Residue Glu170 participates in Ca(2+) binding. N-linked (GlcNAc...) asparagine glycosylation is present at Asn190. Residues Asp226, Glu228, Asp259, Met260, Asn261, Asp262, and Asn263 each coordinate Ca(2+). N-linked (GlcNAc...) asparagine glycosylation occurs at Asn273. The Ca(2+) site is built by Asp293, Asp295, and Asn301. The N-linked (GlcNAc...) asparagine glycan is linked to Asn325. Asp353 is a Ca(2+) binding site. 4 N-linked (GlcNAc...) asparagine glycosylation sites follow: Asn402, Asn572, Asn651, and Asn692. A helical membrane pass occupies residues 725-745 (IIAILLCIIILLILVLMFVVW). Residues 746–906 (MKRRDKERQA…LADMYGGGDD (161 aa)) lie on the Cytoplasmic side of the membrane. Residues 863 to 880 (SGSTAGSLSSLNSSSSGG) are compositionally biased toward low complexity. The segment at 863-883 (SGSTAGSLSSLNSSSSGGDQD) is disordered.

In terms of assembly, homodimer (via extracellular region). Can also form heterodimers with other cadherins (via extracellular region). Dimerization occurs in trans, i.e. with a cadherin chain from another cell. Interacts with CDCP1. Interacts with PCDH8; this complex may also include TAOK2. The interaction with PCDH8 may lead to internalization through TAOK2/p38 MAPK pathway. Identified in a complex containing FGFR4, NCAM1, CDH2, PLCG1, FRS2, SRC, SHC1, GAP43 and CTTN. May interact with OBSCN (via protein kinase domain 2). Interacts with FBXO45. Post-translationally, cleaved by MMP24. Ectodomain cleavage leads to the generation of a soluble 90 kDa N-terminal soluble fragment and a 45 kDa membrane-bound C-terminal fragment 1 (CTF1), which is further cleaved by gamma-secretase into a 35 kDa. Cleavage in neural stem cells by MMP24 affects CDH2-mediated anchorage of neural stem cells to ependymocytes in the adult subependymal zone, leading to modulate neural stem cell quiescence. May be phosphorylated by OBSCN. In terms of processing, O-glycosylated on Ser and Thr residues. Expressed in cardiac muscle (at protein level).

It localises to the cell membrane. The protein resides in the sarcolemma. Its subcellular location is the cell junction. It is found in the adherens junction. The protein localises to the desmosome. It localises to the cell surface. In terms of biological role, calcium-dependent cell adhesion protein; preferentially mediates homotypic cell-cell adhesion by dimerization with a CDH2 chain from another cell. Cadherins may thus contribute to the sorting of heterogeneous cell types. Acts as a regulator of neural stem cells quiescence by mediating anchorage of neural stem cells to ependymocytes in the adult subependymal zone: upon cleavage by MMP24, CDH2-mediated anchorage is affected, leading to modulate neural stem cell quiescence. Plays a role in cell-to-cell junction formation between pancreatic beta cells and neural crest stem (NCS) cells, promoting the formation of processes by NCS cells. Required for proper neurite branching. Required for pre- and postsynaptic organization. CDH2 may be involved in neuronal recognition mechanism. In hippocampal neurons, may regulate dendritic spine density. This Mus musculus (Mouse) protein is Cadherin-2 (Cdh2).